A 428-amino-acid chain; its full sequence is MKTSIFKSLYVQVLTAIAIGILLGHFYPELGAQMKPFGDAFVKLIKMVIAPVIFCTVVTGIAGMESMKAVGRTGAVALLYFEVVSTIALIIGLIIVNVVQPGAGMNVDPSTLDAKAVAVYAEQAKDQGVVAFLLDVIPGSVIGAFASGNILQVLLFAVLFGFALHRLGSKGQLIFNVIESFSQVIFGIINMIMRLAPIGAFGAMAFTIGKYGVGTLVQLGQLIICFYITCILFVVVVLGSIARATGFSIFKFIRYIREELLIVLGTSSSESALPRMLDKMEKLGCRKSVVGLVIPTGYSFNLDGTSIYLTMAAVFIAQATNSHMDIFHQITLLVVLLLSSKGAAGVTGSGFIVLAATISAVGHLPVAGLALILGIDRFMSEARALTNLVGNGVATVVVAKWVKELDAKQMDDVLNNRVPANKSHELSS.

The next 9 membrane-spanning stretches (helical) occupy residues 8-28, 44-64, 76-96, 142-162, 184-204, 222-242, 289-309, 326-346, and 352-372; these read SLYV…HFYP, LIKM…IAGM, VALL…LIIV, IGAF…LFGF, VIFG…FGAM, LIIC…GSIA, VVGL…SIYL, IFHQ…AAGV, and IVLA…LALI.

This sequence belongs to the dicarboxylate/amino acid:cation symporter (DAACS) (TC 2.A.23) family.

The protein localises to the cell inner membrane. Its function is as follows. Responsible for the transport of dicarboxylates such as succinate, fumarate, and malate from the periplasm across the membrane. The chain is C4-dicarboxylate transport protein from Klebsiella pneumoniae (strain 342).